The primary structure comprises 58 residues: Small ribosomal subunit protein bS21B (58 aa).

The protein belongs to the bacterial ribosomal protein bS21 family.

This chain is Small ribosomal subunit protein bS21B, found in Trichormus variabilis (strain ATCC 29413 / PCC 7937) (Anabaena variabilis).